We begin with the raw amino-acid sequence, 135 residues long: Small ribosomal subunit protein eS6 (135 aa).

Belongs to the eukaryotic ribosomal protein eS6 family.

In Methanococcoides burtonii (strain DSM 6242 / NBRC 107633 / OCM 468 / ACE-M), this protein is Small ribosomal subunit protein eS6.